A 387-amino-acid chain; its full sequence is Queuine tRNA-ribosyltransferase (387 aa).

D93 acts as the Proton acceptor in catalysis. Residues 93-97 (DSGGF), D147, Q190, and G217 contribute to the substrate site. The RNA binding stretch occupies residues 248–254 (GVGTPDD). D267 serves as the catalytic Nucleophile. Residues 272-276 (TRAGR) are RNA binding; important for wobble base 34 recognition. Zn(2+) contacts are provided by C305, C307, C310, and H336.

Belongs to the queuine tRNA-ribosyltransferase family. In terms of assembly, homodimer. Within each dimer, one monomer is responsible for RNA recognition and catalysis, while the other monomer binds to the replacement base PreQ1. It depends on Zn(2+) as a cofactor.

It catalyses the reaction 7-aminomethyl-7-carbaguanine + guanosine(34) in tRNA = 7-aminomethyl-7-carbaguanosine(34) in tRNA + guanine. The protein operates within tRNA modification; tRNA-queuosine biosynthesis. In terms of biological role, catalyzes the base-exchange of a guanine (G) residue with the queuine precursor 7-aminomethyl-7-deazaguanine (PreQ1) at position 34 (anticodon wobble position) in tRNAs with GU(N) anticodons (tRNA-Asp, -Asn, -His and -Tyr). Catalysis occurs through a double-displacement mechanism. The nucleophile active site attacks the C1' of nucleotide 34 to detach the guanine base from the RNA, forming a covalent enzyme-RNA intermediate. The proton acceptor active site deprotonates the incoming PreQ1, allowing a nucleophilic attack on the C1' of the ribose to form the product. After dissociation, two additional enzymatic reactions on the tRNA convert PreQ1 to queuine (Q), resulting in the hypermodified nucleoside queuosine (7-(((4,5-cis-dihydroxy-2-cyclopenten-1-yl)amino)methyl)-7-deazaguanosine). This is Queuine tRNA-ribosyltransferase from Gluconacetobacter diazotrophicus (strain ATCC 49037 / DSM 5601 / CCUG 37298 / CIP 103539 / LMG 7603 / PAl5).